A 35-amino-acid chain; its full sequence is Photosystem II reaction center protein T (35 aa).

A helical transmembrane segment spans residues 3–23 (ALVYTFLLVSTLGIIFFAIFF).

This sequence belongs to the PsbT family. PSII is composed of 1 copy each of membrane proteins PsbA, PsbB, PsbC, PsbD, PsbE, PsbF, PsbH, PsbI, PsbJ, PsbK, PsbL, PsbM, PsbT, PsbY, PsbZ, Psb30/Ycf12, at least 3 peripheral proteins of the oxygen-evolving complex and a large number of cofactors. It forms dimeric complexes.

It localises to the plastid. The protein localises to the chloroplast thylakoid membrane. Found at the monomer-monomer interface of the photosystem II (PS II) dimer, plays a role in assembly and dimerization of PSII. PSII is a light-driven water plastoquinone oxidoreductase, using light energy to abstract electrons from H(2)O, generating a proton gradient subsequently used for ATP formation. This chain is Photosystem II reaction center protein T, found in Cabomba caroliniana (Carolina fanwort).